The following is a 107-amino-acid chain: Large ribosomal subunit protein uL24 (107 aa).

Belongs to the universal ribosomal protein uL24 family. As to quaternary structure, part of the 50S ribosomal subunit.

One of two assembly initiator proteins, it binds directly to the 5'-end of the 23S rRNA, where it nucleates assembly of the 50S subunit. Functionally, one of the proteins that surrounds the polypeptide exit tunnel on the outside of the subunit. In Streptomyces coelicolor (strain ATCC BAA-471 / A3(2) / M145), this protein is Large ribosomal subunit protein uL24.